The following is a 65-amino-acid chain: uncharacterized protein (65 aa).

The protein localises to the plastid. It localises to the chloroplast. This is an uncharacterized protein from Guillardia theta (Cryptophyte).